Consider the following 191-residue polypeptide: uncharacterized protein (191 aa).

4 helical membrane-spanning segments follow: residues 12–32 (FAFL…FFTL), 48–68 (LVAL…LTLF), 92–112 (YISV…LLSL), and 168–188 (IFCL…SCAF).

The protein resides in the membrane. This is an uncharacterized protein from Saccharomyces cerevisiae (strain ATCC 204508 / S288c) (Baker's yeast).